The primary structure comprises 860 residues: Alanine--tRNA ligase (860 aa).

Zn(2+) is bound by residues His-563, His-567, Cys-665, and His-669.

It belongs to the class-II aminoacyl-tRNA synthetase family. Requires Zn(2+) as cofactor.

The protein resides in the cytoplasm. It carries out the reaction tRNA(Ala) + L-alanine + ATP = L-alanyl-tRNA(Ala) + AMP + diphosphate. Catalyzes the attachment of alanine to tRNA(Ala) in a two-step reaction: alanine is first activated by ATP to form Ala-AMP and then transferred to the acceptor end of tRNA(Ala). Also edits incorrectly charged Ser-tRNA(Ala) and Gly-tRNA(Ala) via its editing domain. This chain is Alanine--tRNA ligase, found in Vibrio parahaemolyticus serotype O3:K6 (strain RIMD 2210633).